The following is a 364-amino-acid chain: Methylthioribose-1-phosphate isomerase (364 aa).

Residues 46–48 (RGA), Arg-89, and Gln-196 each bind substrate. Asp-237 (proton donor) is an active-site residue. 247-248 (NK) provides a ligand contact to substrate.

This sequence belongs to the eIF-2B alpha/beta/delta subunits family. MtnA subfamily.

It catalyses the reaction 5-(methylsulfanyl)-alpha-D-ribose 1-phosphate = 5-(methylsulfanyl)-D-ribulose 1-phosphate. The protein operates within amino-acid biosynthesis; L-methionine biosynthesis via salvage pathway; L-methionine from S-methyl-5-thio-alpha-D-ribose 1-phosphate: step 1/6. Catalyzes the interconversion of methylthioribose-1-phosphate (MTR-1-P) into methylthioribulose-1-phosphate (MTRu-1-P). This chain is Methylthioribose-1-phosphate isomerase, found in Pelotomaculum thermopropionicum (strain DSM 13744 / JCM 10971 / SI).